Reading from the N-terminus, the 169-residue chain is Putative ribonuclease VapC50 (169 aa).

Its function is as follows. Toxic component of a type II toxin-antitoxin (TA) system. An RNase. The cognate antitoxin is VapB50. In Mycobacterium tuberculosis (strain ATCC 25618 / H37Rv), this protein is Putative ribonuclease VapC50.